A 224-amino-acid polypeptide reads, in one-letter code: Twisted gastrulation protein homolog 1 (224 aa).

The signal sequence occupies residues 1–26; the sequence is MRSPCAALSASLLLLLLLLWARSSVG. N-linked (GlcNAc...) asparagine glycosylation is found at Asn-53, Asn-82, and Asn-148.

The protein belongs to the twisted gastrulation protein family. Interacts with CHRD and BMP4. This interaction enhances CHRD/BMP4 complex formation. Interacts with BMP7.

It is found in the secreted. Functionally, may be involved in dorsoventral axis formation. Seems to antagonize BMP signaling by forming ternary complexes with CHRD and BMPs, thereby preventing BMPs from binding to their receptors. In addition to the anti-BMP function, also has pro-BMP activity, partly mediated by cleavage and degradation of CHRD, which releases BMPs from ternary complexes. May be an important modulator of BMP-regulated cartilage development and chondrocyte differentiation. May play a role in thymocyte development. This Gallus gallus (Chicken) protein is Twisted gastrulation protein homolog 1 (TWSG1).